The following is a 596-amino-acid chain: Transcription factor EGL1 (596 aa).

The 50-residue stretch at 401 to 450 (EETGNHALSEKKRREKLNERFMTLRSIIPSISKIDKVSILDDTIEYLQDL) folds into the bHLH domain.

Efficient DNA binding requires dimerization with another bHLH protein. Homodimer and heterodimer with GL3. Interacts with CPC, MYB0/GL1, MYB5, MYB23, MYB113, MYB114, MYB75/PAP1, MYB90/PAP2, TT2, TRY, TTG1 and MYB66/WER. As to expression, ubiquitous with higher levels in buds and flowers. Specifically localized in developing root hair cells. Expressed in epidermal root hair cells (trichoblasts) and moves to root hairless cells (atrichoblasts) by a cell-to-cell movement through plasmodesmata (at protein level).

It is found in the nucleus. Transcription activator, when associated with MYB75/PAP1, MYB90/PAP2 or TT2. Involved in epidermal cell fate specification. Negatively regulates stomata formation but promotes trichome formation. Together with MYB66/WER, promotes the formation of non-hair cells in root epidermis cells in the N position. Whereas together with CPC, promotes the formation of hair cells in root epidermis cells in the H position by inhibiting non-hair cell formation. Also seems to play a role in the activation of anthocyanin biosynthesis, probably together with MYB75/PAP1. Involved in seed mucilage production. Activates the transcription of GL2. The protein is Transcription factor EGL1 (BHLH2) of Arabidopsis thaliana (Mouse-ear cress).